The following is a 191-amino-acid chain: uncharacterized protein (191 aa).

The first 22 residues, 1-22, serve as a signal peptide directing secretion; the sequence is MKSLRLMLCAMPLMLTGCSTMS.

This is an uncharacterized protein from Escherichia coli (strain K12).